A 188-amino-acid chain; its full sequence is GTPase KRas (188 aa).

GTP-binding positions include 10–18 (GAGGVGKSA), 29–35 (VDEYDPT), 59–60 (AG), and 116–119 (NKCD). The Effector region motif lies at 32–40 (YDPTIEDSY). The segment at 168-188 (EKMSKDGKKKKKKTKTKCIIM) is disordered. Cys185 bears the Cysteine methyl ester mark. Cys185 carries the S-farnesyl cysteine lipid modification. The propeptide at 186 to 188 (IIM) is removed in mature form.

It belongs to the small GTPase superfamily. Ras family.

The protein resides in the cell membrane. It is found in the cytoplasm. The catalysed reaction is GTP + H2O = GDP + phosphate + H(+). With respect to regulation, alternates between an inactive form bound to GDP and an active form bound to GTP. Activated by a guanine nucleotide-exchange factor (GEF) and inactivated by a GTPase-activating protein (GAP). Its function is as follows. Ras proteins bind GDP/GTP and possess intrinsic GTPase activity. Plays an important role in the regulation of cell proliferation. May play a role in promoting oncogenic events by inducing transcriptional silencing of tumor suppressor genes (TSGs). The protein is GTPase KRas (KRAS) of Meleagris gallopavo (Wild turkey).